The sequence spans 353 residues: Phospho-N-acetylmuramoyl-pentapeptide-transferase (353 aa).

10 helical membrane-spanning segments follow: residues 24–44 (LGFF…ILWA), 66–86 (TPTM…VLCA), 88–108 (LGNL…FVGF), 129–149 (FGML…KGLD), 160–180 (PLFE…FLST), 192–212 (GLAS…VYVA), 229–249 (VGEL…FLWY), 256–276 (VFMG…NAIV), 281–301 (ILLV…ILQV), and 330–350 (KVIV…LLSL).

This sequence belongs to the glycosyltransferase 4 family. MraY subfamily. Requires Mg(2+) as cofactor.

Its subcellular location is the cell inner membrane. It catalyses the reaction UDP-N-acetyl-alpha-D-muramoyl-L-alanyl-gamma-D-glutamyl-meso-2,6-diaminopimeloyl-D-alanyl-D-alanine + di-trans,octa-cis-undecaprenyl phosphate = di-trans,octa-cis-undecaprenyl diphospho-N-acetyl-alpha-D-muramoyl-L-alanyl-D-glutamyl-meso-2,6-diaminopimeloyl-D-alanyl-D-alanine + UMP. Its pathway is cell wall biogenesis; peptidoglycan biosynthesis. Catalyzes the initial step of the lipid cycle reactions in the biosynthesis of the cell wall peptidoglycan: transfers peptidoglycan precursor phospho-MurNAc-pentapeptide from UDP-MurNAc-pentapeptide onto the lipid carrier undecaprenyl phosphate, yielding undecaprenyl-pyrophosphoryl-MurNAc-pentapeptide, known as lipid I. This is Phospho-N-acetylmuramoyl-pentapeptide-transferase from Helicobacter pylori (strain ATCC 700392 / 26695) (Campylobacter pylori).